Reading from the N-terminus, the 108-residue chain is Ig kappa chain V-V region EPC 109 (108 aa).

A framework-1 region spans residues 1–23 (DVQMIQSPSSLSASLGDIVTMTC). An intrachain disulfide couples C23 to C88. Residues 24–34 (QASQGTNINLN) form a complementarity-determining-1 region. Residues 35–49 (WFQQKPGKAPKLLIY) are framework-2. Residues 50 to 56 (GASILEA) are complementarity-determining-2. Positions 57–88 (GVPSRFSGRRYGTDFTLTISSLEDEDMATYFC) are framework-3. A complementarity-determining-3 region spans residues 89-97 (LQHSYLPYT). Residues 98 to 108 (FGGGTKLEKKR) form a framework-4 region.

The polypeptide is Ig kappa chain V-V region EPC 109 (Mus musculus (Mouse)).